A 598-amino-acid chain; its full sequence is Movement protein Hsp70h (598 aa).

This sequence belongs to the heat shock protein 70 family. In terms of assembly, homomultimer. Interacts with p20. This interaction allows the docking of the latter to the virion.

It localises to the virion. It is found in the host cell junction. Its subcellular location is the host plasmodesma. Transports viral genome to neighboring plant cells directly through plasmosdesmata, without any budding. The movement protein allows efficient cell to cell propagation, by bypassing the host cell wall barrier. Two movement proteins, p6, Hsp70h and three structural proteins, CP, CPm, and P64 are essential for cell-cell movement. Also plays a role in virion formation. Together with CPm and p64, encapsidates the 5'-terminal portion of the viral genome. The polypeptide is Movement protein Hsp70h (Beta vulgaris (Sugar beet)).